Here is a 203-residue protein sequence, read N- to C-terminus: uncharacterized protein (203 aa).

The segment at Leu174 to His203 is disordered.

This is an uncharacterized protein from Homo sapiens (Human).